The chain runs to 94 residues: MFVDDDSLIIYSTWPSTLSDSSGRVIVMPDNRSFTFKEGFKLDESIKSILLVNPSSIDLLKIRVYKHRIKWMGNIFVLFEQENIPPPFRLVNDK.

Belongs to the orthopoxvirus OPG142 family. Part of a complex composed of the kinase OPG054, OPG092, OPG100, OPG114, OPG115, OPG142 and OPG157.

It is found in the host cytoplasm. The protein localises to the virion. Functionally, late protein which is a part of a large complex required for early virion morphogenesis. This complex participates in the formation of virosomes and the incorporation of virosomal contents into nascent immature virions. Required for the stability and kinase activity of OPG054. The protein is Core protein OPG142 (OPG142) of Homo sapiens (Human).